Here is a 68-residue protein sequence, read N- to C-terminus: Large ribosomal subunit protein bL31 (68 aa).

4 residues coordinate Zn(2+): Cys16, Cys18, Cys36, and Cys39.

The protein belongs to the bacterial ribosomal protein bL31 family. Type A subfamily. Part of the 50S ribosomal subunit. The cofactor is Zn(2+).

Binds the 23S rRNA. The chain is Large ribosomal subunit protein bL31 from Dictyoglomus thermophilum (strain ATCC 35947 / DSM 3960 / H-6-12).